The primary structure comprises 406 residues: NIPA-like protein 3 (406 aa).

4 helical membrane-spanning segments follow: residues 33–53 (NLIG…ALNL), 76–96 (WWLG…SYAF), 101–121 (LIVP…IIFI), and 135–155 (VLSF…VTFA). N-linked (GlcNAc...) asparagine glycosylation occurs at asparagine 166. Helical transmembrane passes span 171 to 191 (LVSW…CLLL), 202 to 222 (IVVI…TVKA), 240 to 260 (PIFY…AAFL), 271 to 291 (LIAS…GAIF), and 300 to 320 (VLHI…VFLI). Serine 372 bears the Phosphoserine mark.

This sequence belongs to the NIPA family.

It is found in the membrane. This Homo sapiens (Human) protein is NIPA-like protein 3 (NIPAL3).